The sequence spans 176 residues: Ribosome maturation factor RimM (176 aa).

The PRC barrel domain occupies 100–173; the sequence is KDEYHYHDLI…WLLINPPPGL (74 aa).

Belongs to the RimM family. In terms of assembly, binds ribosomal protein uS19.

Its subcellular location is the cytoplasm. An accessory protein needed during the final step in the assembly of 30S ribosomal subunit, possibly for assembly of the head region. Essential for efficient processing of 16S rRNA. May be needed both before and after RbfA during the maturation of 16S rRNA. It has affinity for free ribosomal 30S subunits but not for 70S ribosomes. This Prochlorococcus marinus (strain NATL2A) protein is Ribosome maturation factor RimM.